Consider the following 297-residue polypeptide: Oxidoreductase R1 (297 aa).

It belongs to the asaB hydroxylase/desaturase family.

It functions in the pathway secondary metabolite biosynthesis. Functionally, oxidoreductase; part of the gene cluster that mediates the biosynthesis of squalestatin S1 (SQS1, also known as zaragozic acid A), a heavily oxidized fungal polyketide that offers potent cholesterol lowering activity by targeting squalene synthase (SS). SQS1 is composed of a 2,8-dioxobicyclic[3.2.1]octane-3,4,5-tricarboxyclic acid core that is connected to two lipophilic polyketide arms. These initial steps feature the priming of an unusual benzoic acid starter unit onto the highly reducing polyketide synthase pks2, followed by oxaloacetate extension and product release to generate a tricarboxylic acid containing product. The phenylalanine ammonia lyase (PAL) M7 and the acyl-CoA ligase M9 are involved in transforming phenylalanine into benzoyl-CoA. The citrate synthase-like protein R3 is involved in connecting the C-alpha-carbons of the hexaketide chain and oxaloacetate to afford the tricarboxylic acid unit. The potential hydrolytic enzymes, M8 and M10, are in close proximity to pks2 and may participate in product release. On the other side, the tetraketide arm is synthesized by a the squalestatin tetraketide synthase pks1 and enzymatically esterified to the core in the last biosynthetic step, by the acetyltransferase M4. The biosynthesis of the tetraketide must involve 3 rounds of chain extension. After the first and second rounds methyl-transfer occurs, and in all rounds of extension the ketoreductase and dehydratase are active. The enoyl reductase and C-MeT of pks1 are not active in the final round of extension. The acetyltransferase M4 appears to have a broad substrate selectivity for its acyl CoA substrate, allowing the in vitro synthesis of novel squalestatins. The biosynthesis of SQS1 requires several oxidative steps likely performed by oxidoreductases M1, R1 and R2. Finally, in support of the identification of the cluster as being responsible for SQS1 production, the cluster contains a gene encoding a putative squalene synthase (SS) R6, suggesting a likely mechanism for self-resistance. The sequence is that of Oxidoreductase R1 from Phoma sp. (strain ATCC 20986 / MF5453).